The chain runs to 100 residues: UPF0213 protein YhbQ (100 aa).

The GIY-YIG domain maps to 2 to 77; it reads TPWFLYLIRT…KQLTKRQKER (76 aa).

This sequence belongs to the UPF0213 family.

The sequence is that of UPF0213 protein YhbQ from Escherichia coli O81 (strain ED1a).